A 194-amino-acid polypeptide reads, in one-letter code: Large ribosomal subunit protein uL10 (194 aa).

Over residues 172 to 187 (EGGAAEAPAEAATEAP) the composition is skewed to low complexity. Residues 172-194 (EGGAAEAPAEAATEAPAEAEAES) form a disordered region.

Belongs to the universal ribosomal protein uL10 family. In terms of assembly, part of the ribosomal stalk of the 50S ribosomal subunit. The N-terminus interacts with L11 and the large rRNA to form the base of the stalk. The C-terminus forms an elongated spine to which L12 dimers bind in a sequential fashion forming a multimeric L10(L12)X complex.

Forms part of the ribosomal stalk, playing a central role in the interaction of the ribosome with GTP-bound translation factors. The chain is Large ribosomal subunit protein uL10 from Rhodococcus erythropolis (strain PR4 / NBRC 100887).